A 259-amino-acid chain; its full sequence is MLPSTSLSSSMHGNGVLNSRDAARHTAGAKRYKYLRRLFRFRQMDFEFAAWQMLYLFTSPQRVYRNFHYRKQTKDQWARDDPAFLVLLSIWLCVSTIGFGFVLDMGFFETIKLLLWVVFIDCVGVGLLISTLMWFVSNKYLVKRQSRDYDVEWGYAFDVHLNAFYPLLVILHFIQLFFINHVILTDTFIGYLVGNTLWLIAVGYYIYVTFLGYSALPFLKNTVILLYPFAPLMVLYGLSLALGWNFTHTLCSFYKYRVK.

M1 bears the N-acetylmethionine mark. Residues 1–82 lie on the Cytoplasmic side of the membrane; sequence MLPSTSLSSS…TKDQWARDDP (82 aa). S6 is modified (phosphoserine). Residues 83-103 form a helical membrane-spanning segment; sequence AFLVLLSIWLCVSTIGFGFVL. At 104–112 the chain is on the lumenal side; it reads DMGFFETIK. The helical transmembrane segment at 113-133 threads the bilayer; that stretch reads LLLWVVFIDCVGVGLLISTLM. At 134 to 163 the chain is on the cytoplasmic side; the sequence is WFVSNKYLVKRQSRDYDVEWGYAFDVHLNA. A helical transmembrane segment spans residues 164-184; sequence FYPLLVILHFIQLFFINHVIL. Over 185–187 the chain is Lumenal; that stretch reads TDT. The helical transmembrane segment at 188–208 threads the bilayer; sequence FIGYLVGNTLWLIAVGYYIYV. Residues 209–222 are Cytoplasmic-facing; it reads TFLGYSALPFLKNT. A helical membrane pass occupies residues 223 to 243; sequence VILLYPFAPLMVLYGLSLALG. The Lumenal segment spans residues 244-259; sequence WNFTHTLCSFYKYRVK.

This sequence belongs to the unc-50 family. As to expression, highly expressed in periodontal ligament and bone marrow, but not in gingival fibroblasts.

Its subcellular location is the nucleus inner membrane. The protein resides in the golgi apparatus membrane. Involved in the cell surface expression of neuronal nicotinic receptors. Binds RNA. The sequence is that of Protein unc-50 homolog (Unc50) from Mus musculus (Mouse).